Consider the following 145-residue polypeptide: Large ribosomal subunit protein uL16 (145 aa).

It belongs to the universal ribosomal protein uL16 family. Part of the 50S ribosomal subunit.

In terms of biological role, binds 23S rRNA and is also seen to make contacts with the A and possibly P site tRNAs. The polypeptide is Large ribosomal subunit protein uL16 (Exiguobacterium sp. (strain ATCC BAA-1283 / AT1b)).